The sequence spans 417 residues: FK506-binding protein 3 (417 aa).

2 disordered regions span residues 42–129 and 191–307; these read SLDD…LSPE and EGCG…DKPK. Acidic residues-rich tracts occupy residues 61–84, 99–120, and 197–222; these read FDDE…EESE, SEEE…EFEE, and CACD…DASD. Basic and acidic residues-rich tracts occupy residues 236-249 and 256-307; these read ANEK…EPKA and DQKD…DKPK. Positions 331 to 417 constitute a PPIase FKBP-type domain; the sequence is GARVGMRYIG…TFDVKLVSLK (87 aa).

Belongs to the FKBP-type PPIase family. FKBP3/4 subfamily.

Its subcellular location is the nucleus. The protein localises to the nucleolus. It catalyses the reaction [protein]-peptidylproline (omega=180) = [protein]-peptidylproline (omega=0). Inhibited by both FK506 and rapamycin. In terms of biological role, PPIases accelerate the folding of proteins. It catalyzes the cis-trans isomerization of proline imidic peptide bonds in oligopeptides. The protein is FK506-binding protein 3 (FPR3) of Eremothecium gossypii (strain ATCC 10895 / CBS 109.51 / FGSC 9923 / NRRL Y-1056) (Yeast).